A 103-amino-acid chain; its full sequence is Large ribosomal subunit protein bL21 (103 aa).

The protein belongs to the bacterial ribosomal protein bL21 family. Part of the 50S ribosomal subunit. Contacts protein L20.

Functionally, this protein binds to 23S rRNA in the presence of protein L20. This Delftia acidovorans (strain DSM 14801 / SPH-1) protein is Large ribosomal subunit protein bL21.